A 317-amino-acid chain; its full sequence is Methionyl-tRNA formyltransferase (317 aa).

111-114 contributes to the (6S)-5,6,7,8-tetrahydrofolate binding site; sequence SLLP.

This sequence belongs to the Fmt family.

The enzyme catalyses L-methionyl-tRNA(fMet) + (6R)-10-formyltetrahydrofolate = N-formyl-L-methionyl-tRNA(fMet) + (6S)-5,6,7,8-tetrahydrofolate + H(+). Attaches a formyl group to the free amino group of methionyl-tRNA(fMet). The formyl group appears to play a dual role in the initiator identity of N-formylmethionyl-tRNA by promoting its recognition by IF2 and preventing the misappropriation of this tRNA by the elongation apparatus. This is Methionyl-tRNA formyltransferase from Chlorobium phaeobacteroides (strain BS1).